We begin with the raw amino-acid sequence, 302 residues long: Recombination-associated protein RdgC (302 aa).

It belongs to the RdgC family.

The protein localises to the cytoplasm. The protein resides in the nucleoid. Functionally, may be involved in recombination. This chain is Recombination-associated protein RdgC, found in Mannheimia succiniciproducens (strain KCTC 0769BP / MBEL55E).